The primary structure comprises 1555 residues: UDP-glucose:glycoprotein glucosyltransferase 1 (1555 aa).

An N-terminal signal peptide occupies residues 1-42 (MGCKGDASGACAAGALPVTGVCYKMGVLVVLTVLWLFSSVKA). Residues Asn536 and Asn1228 are each glycosylated (N-linked (GlcNAc...) asparagine). Residues 1244–1555 (KTEEVKQDKD…REGPQKREEL (312 aa)) are glucosyltransferase. Ser1277 bears the Phosphoserine mark. The disordered stretch occupies residues 1534–1555 (GALYKEKTKEPSREGPQKREEL). Residues 1552–1555 (REEL) carry the Prevents secretion from ER motif.

It belongs to the glycosyltransferase 8 family. Monomer as well as in a tight complex with SELENOF. Interacts with METTL23. Part of a large chaperone multiprotein complex comprising DNAJB11, HSP90B1, HSPA5, HYOU, PDIA2, PDIA4, PDIA6, PPIB, SDF2L1, UGGT1 and very small amounts of ERP29, but not, or at very low levels, CALR nor CANX. It depends on Ca(2+) as a cofactor. Mn(2+) serves as cofactor. Higher levels in pancreas, skeletal muscle, kidney, and brain. Low levels in lung and heart.

Its subcellular location is the endoplasmic reticulum lumen. The protein resides in the endoplasmic reticulum-Golgi intermediate compartment. The catalysed reaction is N(4)-(alpha-D-Man-(1-&gt;2)-alpha-D-Man-(1-&gt;2)-alpha-D-Man-(1-&gt;3)-[alpha-D-Man-(1-&gt;2)-alpha-D-Man-(1-&gt;3)-[alpha-D-Man-(1-&gt;2)-alpha-D-Man-(1-&gt;6)]-alpha-D-Man-(1-&gt;6)]-beta-D-Man-(1-&gt;4)-beta-D-GlcNAc-(1-&gt;4)-beta-D-GlcNAc)-L-asparaginyl-[protein] (N-glucan mannose isomer 9A1,2,3B1,2,3) + UDP-alpha-D-glucose = N(4)-(alpha-D-Glc-(1-&gt;3)-alpha-D-Man-(1-&gt;2)-alpha-D-Man-(1-&gt;2)-alpha-D-Man-(1-&gt;3)-[alpha-D-Man-(1-&gt;2)-alpha-D-Man-(1-&gt;3)-[alpha-D-Man-(1-&gt;2)-alpha-D-Man-(1-&gt;6)]-alpha-D-Man-(1-&gt;6)]-beta-D-Man-(1-&gt;4)-beta-D-GlcNAc-(1-&gt;4)-beta-D-GlcNAc)-L-asparaginyl-[protein] + UDP + H(+). It functions in the pathway protein modification; protein glycosylation. Catalytic activity is enhanced by complex formation with SELENOF. Functionally, recognizes glycoproteins with minor folding defects. Reglucosylates single N-glycans near the misfolded part of the protein, thus providing quality control for protein folding in the endoplasmic reticulum. Reglucosylated proteins are recognized by calreticulin for recycling to the endoplasmic reticulum and refolding or degradation. This is UDP-glucose:glycoprotein glucosyltransferase 1 (UGGT1) from Homo sapiens (Human).